The primary structure comprises 308 residues: MDEEGSATARAKMMPQTLVLDHVSPATRLLEKRRQMFEVQEALEAQKQDFNRKEEVFKRREEALKLKDLELQESLIRFSKFLQENDSKRARAEKKANDEIKARIQKEKEIEQLTEVLEELKSEKERILEVLEKNMRYQHYLESVLEVADEYQEVADLLLRHATLSATNADLKDHQRKCSELAEKVRTELQIYVKQKTDEILNLNNQVAKLKTELEGYEAEAMVQEAKKDSSLQIASQRTLEYGQVVLSADNIFNRCRSKSSIGHPAESNPLHQLDVIGNFVSDLGSIIKQFKQEQAKRASLASRAEIE.

2 coiled-coil regions span residues 103-134 (RIQKEKEIEQLTEVLEELKSEKERILEVLEKN) and 164-227 (LSAT…QEAK).

The protein belongs to the CFAP73 family. Interacts with FAP100; form the modifier of inner arm (MIA) complex.

The protein resides in the cytoplasm. The protein localises to the cytoskeleton. It is found in the flagellum axoneme. In terms of biological role, as part of MIA, a complex associated with the outer doublet microtubules of the axoneme, may play a role in ciliary/flagellar motility by regulating the assembly and the activity of inner dynein arm. This is Cilia- and flagella-associated protein 73 from Chlamydomonas reinhardtii (Chlamydomonas smithii).